The primary structure comprises 263 residues: MTQPSLNPLVIKLGGAALSCSQTLSQLFGAIASYQQKEQRQIVIVHGGGYLVDELMEKLQLPTVKKNGLRVTPYDQIPLIAGALAGTANKLLQGQAMADGLNAIGLSLADGGLCQVEELDPELGAVGKATPGDSSLLQTILNAGALPIISSIGLTAQGQLMNVNADQAAVAVAGALDAQLVLLSDVSGVLDGKGHLIKSLNQQEADALIAGKVITDGMIVKVQAALEAANDLGRAIEVATWRYPENLEKLFAGESIGTQFLPA.

Substrate contacts are provided by residues 48-49 (GG), arginine 70, and asparagine 162.

It belongs to the acetylglutamate kinase family. ArgB subfamily.

It localises to the cytoplasm. It catalyses the reaction N-acetyl-L-glutamate + ATP = N-acetyl-L-glutamyl 5-phosphate + ADP. The protein operates within amino-acid biosynthesis; L-arginine biosynthesis; N(2)-acetyl-L-ornithine from L-glutamate: step 2/4. Its function is as follows. Catalyzes the ATP-dependent phosphorylation of N-acetyl-L-glutamate. The polypeptide is Acetylglutamate kinase (Vibrio vulnificus (strain CMCP6)).